The chain runs to 134 residues: Replication enhancer protein (134 aa).

This sequence belongs to the geminiviridae replication enhancer protein family. Homooligomer. Interacts with the replication-associated protein (REP). Interacts with host proliferating cell nuclear antigen (PCNA). Interacts with host retinoblastoma-related protein 1 (RBR1), and may thereby deregulate the host cell cycle. Oligomerization and interaction with PCNA are necessary for optimal replication enhancement.

Its function is as follows. Increases viral DNA accumulation. Enhances infectivity and symptom expression. In Manihot esculenta (Cassava), this protein is Replication enhancer protein.